We begin with the raw amino-acid sequence, 406 residues long: Probable endo-xylogalacturonan hydrolase A (406 aa).

The first 18 residues, 1 to 18, serve as a signal peptide directing secretion; that stretch reads MTLYRNLLLLASLGLSYA. Asn84 carries N-linked (GlcNAc...) asparagine glycosylation. PbH1 repeat units lie at residues 183-213 and 214-235; these read ATNVVFSNLKMDANSKSDNPPKNTDGFDIGE and STYVTITEVTVVNDDDCVALKP. Asp228 serves as the catalytic Proton donor. His251 is a catalytic residue. 3 PbH1 repeats span residues 266–289, 299–320, and 333–375; these read VKNIYVTGATMINSTKAAGIKTYP, VSNVTFTDFTVDNSDYAFQIQS, and PGNA…SISG. Asn278 and Asn301 each carry an N-linked (GlcNAc...) asparagine glycan.

The protein belongs to the glycosyl hydrolase 28 family.

It localises to the secreted. Pectinolytic enzyme involved in the degradation of xylogalacturonan (xga), a galacturonan backbone heavily substituted with xylose, and which is one important component of the hairy regions of pectin. Activity requires a galacturonic acid backbone substituted with xylose. This chain is Probable endo-xylogalacturonan hydrolase A (xghA), found in Aspergillus niger (strain ATCC MYA-4892 / CBS 513.88 / FGSC A1513).